The chain runs to 1017 residues: Probable calcium-transporting ATPase 8, plasma membrane-type (1017 aa).

The Cytoplasmic segment spans residues 1–153 (MEKLDRYLQE…FVWDAFQDMT (153 aa)). 2 consecutive transmembrane segments (helical) span residues 154-174 (LIILMVCALLSVAVGLATEGW) and 177-197 (GMYDGLGIILSIFLVVMVTAV). Topologically, residues 198–228 (SDYKQSLQFKELDNEKKKIFIHVTRDGRRQK) are cytoplasmic. A run of 2 helical transmembrane segments spans residues 229–249 (ISIYDLVVGDIVHLSIGDQVP) and 331–351 (VATVIGKIGLVFAILTFLVLL). At 352-384 (VRFLIDKGMTVGLLKWYSTDALTIVNYFATAVT) the chain is on the cytoplasmic side. The helical transmembrane segment at 385–405 (IIVVAVPEGLPLAVTLSLAFA) threads the bilayer. D434 serves as the catalytic 4-aspartylphosphate intermediate. Mg(2+)-binding residues include D736 and D740. Residues 803–823 (IVALVINFVSACITGSAPLTA) traverse the membrane as a helical segment. Over 824-825 (VQ) the chain is Cytoplasmic. A run of 2 helical transmembrane segments spans residues 826–846 (LLWVNMIMDTLGALALATEPP) and 875–895 (SLYQLFVLGALMFGGESLLNI). Residues 896–938 (KGADSKSIINTLIFNSFVFCQVFNEINSREMQKINVFRGIISN) lie on the Cytoplasmic side of the membrane. Helical transmembrane passes span 939-959 (WIFIAVIAATVAFQVVIIEFL) and 973-993 (WLLSVGLGSISLIVGVILKCI). The Cytoplasmic portion of the chain corresponds to 994-1017 (PVGSGETSATPNGYRPLANGPDDI).

It belongs to the cation transport ATPase (P-type) (TC 3.A.3) family. Type IIB subfamily.

The protein resides in the membrane. It catalyses the reaction Ca(2+)(in) + ATP + H2O = Ca(2+)(out) + ADP + phosphate + H(+). Activated by calmodulin. Functionally, this magnesium-dependent enzyme catalyzes the hydrolysis of ATP coupled with the translocation of calcium from the cytosol out of the cell, into the endoplasmic reticulum, or into organelles. This Oryza sativa subsp. japonica (Rice) protein is Probable calcium-transporting ATPase 8, plasma membrane-type.